A 629-amino-acid polypeptide reads, in one-letter code: MFYPDPFDVIIIGGGHAGTEAAMAAARMGQQTLLLTHNIDTLGQMSCNPAIGGIGKGHLVKEVDALGGLMAAAIDRAGIQFRILNASKGPAVRATRAQADRVLYRQAVRTALENQPNLMLFQQAVEDLIVENDRVVGAVTQMGLKFRAKAVVLTVGTFLDGKIHIGLDNYSGGRAGDPPSIPLSRRLRELPLRVSRLKTGTPPRIDARTIDFSVLAQQHGDNPMPVFSFMGNASQHPQQVPCYITHTNEKTHDVIRNNLDRSPMYAGVIEGIGPRYCPSIEDKVMRFSDRNQHQIFLEPEGLTSNEIYPNGISTSLPFDVQMQIVRSMQGMENAKIVRPGYAIEYDFFDPRDLKPTLESKFIQGLFFAGQINGTTGYEEAAAQGLLAGLNAARLSADKEGWAPARSQAYLGVLVDDLCTLGTKEPYRMFTSRAEYRLMLREDNADLRLTEIGRDLGLVDDERWARFNEKLENIERERQRLKSTWVTPSAEFAADVNAHLTTPLSREASGEDLLRRPEMTYAQLTSLSAFAPALEDEQAAEQVEIQVKYEGYIARQQDEIEKQLRNENTLLPATLDYRLVSGLSNEVIAKLNDHKPASIGQASRISGVTPAAISILLVWLKKQGMLRRSA.

FAD is bound by residues 13–18 (GGGHAG), valine 125, and serine 180. An NAD(+)-binding site is contributed by 273–287 (GPRYCPSIEDKVMRF). Glutamine 370 serves as a coordination point for FAD.

The protein belongs to the MnmG family. As to quaternary structure, homodimer. Heterotetramer of two MnmE and two MnmG subunits. Requires FAD as cofactor.

Its subcellular location is the cytoplasm. Functionally, NAD-binding protein involved in the addition of a carboxymethylaminomethyl (cmnm) group at the wobble position (U34) of certain tRNAs, forming tRNA-cmnm(5)s(2)U34. The sequence is that of tRNA uridine 5-carboxymethylaminomethyl modification enzyme MnmG from Salmonella arizonae (strain ATCC BAA-731 / CDC346-86 / RSK2980).